We begin with the raw amino-acid sequence, 788 residues long: Protocadherin beta-18 (788 aa).

The signal sequence occupies residues 1-28; it reads MEPGKGRAQPTRQVLLFFVFLGGSLVYS. 5 consecutive Cadherin domains span residues 29–133, 134–242, 243–347, 348–452, and 453–562; these read ETWS…TPTF, LNNH…APEF, EKPV…PPEI, AMTS…APAF, and TQTS…SPFV. At 29–691 the chain is on the extracellular side; the sequence is ETWSYSIAEE…AQADSLTVYL (663 aa). Asparagine 169 is a glycosylation site (N-linked (GlcNAc...) asparagine). N-linked (GlcNAc...) asparagine glycosylation is found at asparagine 419 and asparagine 437. The N-linked (GlcNAc...) asparagine glycan is linked to asparagine 568. Residues 569 to 672 form the Cadherin 6 domain; the sequence is GSAPCTELVP…LVDGFSQPYL (104 aa). The helical transmembrane segment at 692–712 threads the bilayer; that stretch reads VVALASVSSLFLFSVFLFVAV. Topologically, residues 713–788 are cytoplasmic; sequence RLCRRSRAAS…DSDMEKAPPF (76 aa).

The protein localises to the cell membrane. In terms of biological role, potential calcium-dependent cell-adhesion protein. In Pan troglodytes (Chimpanzee), this protein is Protocadherin beta-18 (PCDHB18).